A 214-amino-acid polypeptide reads, in one-letter code: Ribosomal RNA small subunit methyltransferase G (214 aa).

S-adenosyl-L-methionine is bound by residues Gly-81, Met-86, 132 to 133, and Arg-147; that span reads VE.

Belongs to the methyltransferase superfamily. RNA methyltransferase RsmG family.

Its subcellular location is the cytoplasm. The catalysed reaction is guanosine(527) in 16S rRNA + S-adenosyl-L-methionine = N(7)-methylguanosine(527) in 16S rRNA + S-adenosyl-L-homocysteine. Specifically methylates the N7 position of guanine in position 527 of 16S rRNA. The protein is Ribosomal RNA small subunit methyltransferase G of Ectopseudomonas mendocina (strain ymp) (Pseudomonas mendocina).